The following is a 104-amino-acid chain: L-rhamnose mutarotase (104 aa).

Tyr18 contributes to the substrate binding site. His22 acts as the Proton donor in catalysis. Substrate is bound by residues Tyr41 and 76 to 77 (WW).

This sequence belongs to the rhamnose mutarotase family. As to quaternary structure, homodimer.

The protein resides in the cytoplasm. The catalysed reaction is alpha-L-rhamnose = beta-L-rhamnose. The protein operates within carbohydrate metabolism; L-rhamnose metabolism. Involved in the anomeric conversion of L-rhamnose. The chain is L-rhamnose mutarotase from Enterobacter sp. (strain 638).